Here is a 448-residue protein sequence, read N- to C-terminus: Phosphoglucosamine mutase (448 aa).

The active-site Phosphoserine intermediate is the Ser100. Mg(2+) is bound by residues Ser100, Asp240, Asp242, and Asp244. Ser100 carries the phosphoserine modification.

The protein belongs to the phosphohexose mutase family. It depends on Mg(2+) as a cofactor. Post-translationally, activated by phosphorylation.

It carries out the reaction alpha-D-glucosamine 1-phosphate = D-glucosamine 6-phosphate. Its function is as follows. Catalyzes the conversion of glucosamine-6-phosphate to glucosamine-1-phosphate. The sequence is that of Phosphoglucosamine mutase from Bacillus velezensis (strain DSM 23117 / BGSC 10A6 / LMG 26770 / FZB42) (Bacillus amyloliquefaciens subsp. plantarum).